A 505-amino-acid chain; its full sequence is Deoxyguanosinetriphosphate triphosphohydrolase (505 aa).

Positions 66-273 (RLTHSMEVQQ…MEAADDISYC (208 aa)) constitute an HD domain.

The protein belongs to the dGTPase family. Type 1 subfamily. In terms of assembly, homotetramer. Mg(2+) serves as cofactor.

The enzyme catalyses dGTP + H2O = 2'-deoxyguanosine + triphosphate + H(+). In terms of biological role, dGTPase preferentially hydrolyzes dGTP over the other canonical NTPs. This is Deoxyguanosinetriphosphate triphosphohydrolase from Escherichia coli O157:H7.